The chain runs to 267 residues: MKFSVLMSLYIKENPQFLRECFESLVAQTRQADEIVLVFDGVVTPDLEFVVTEFETKLPLKLVKLPQNRGLGKALNEGLLHCDYDWVFRMDTDDICVPDRFEKQVAFIEQHPESIIFGGQIAEFGKNVNDIVAYRNVPTSAQEIIKFTQKRCPFNHMTVAYQKSAVINCGGYEDLQEDYYLWIKLVAQGLYMANLPDILVYARVGNGMVSRRRGVNQAKAEWRLFKLKYRLGIQGLLSGLFTFALRFGSRLLPTSLLKKLYQTFLRK.

Belongs to the glycosyltransferase 2 family.

This is an uncharacterized protein from Haemophilus influenzae (strain ATCC 51907 / DSM 11121 / KW20 / Rd).